A 323-amino-acid chain; its full sequence is tRNA dimethylallyltransferase (323 aa).

ATP is bound at residue 12–19; it reads GPTAAGKT. 14–19 is a substrate binding site; it reads TAAGKT. Interaction with substrate tRNA stretches follow at residues 37-40 and 161-165; these read DSAL and QRLIR.

Belongs to the IPP transferase family. As to quaternary structure, monomer. It depends on Mg(2+) as a cofactor.

The catalysed reaction is adenosine(37) in tRNA + dimethylallyl diphosphate = N(6)-dimethylallyladenosine(37) in tRNA + diphosphate. Functionally, catalyzes the transfer of a dimethylallyl group onto the adenine at position 37 in tRNAs that read codons beginning with uridine, leading to the formation of N6-(dimethylallyl)adenosine (i(6)A). The sequence is that of tRNA dimethylallyltransferase from Pseudomonas syringae pv. tomato (strain ATCC BAA-871 / DC3000).